The primary structure comprises 532 residues: Glucose-6-phosphate isomerase (532 aa).

The active-site Proton donor is the Glu-330. Catalysis depends on residues His-359 and Lys-461.

The protein belongs to the GPI family.

The protein localises to the cytoplasm. It catalyses the reaction alpha-D-glucose 6-phosphate = beta-D-fructose 6-phosphate. Its pathway is carbohydrate biosynthesis; gluconeogenesis. It participates in carbohydrate degradation; glycolysis; D-glyceraldehyde 3-phosphate and glycerone phosphate from D-glucose: step 2/4. Functionally, catalyzes the reversible isomerization of glucose-6-phosphate to fructose-6-phosphate. In Synechococcus sp. (strain CC9605), this protein is Glucose-6-phosphate isomerase.